A 506-amino-acid polypeptide reads, in one-letter code: Kynurenine 3-monooxygenase (506 aa).

The interval 153–174 is disordered; the sequence is QETSLLPGEESEKDKKQNTEDE. Residues 162 to 171 show a composition bias toward basic and acidic residues; that stretch reads ESEKDKKQNT.

This sequence belongs to the aromatic-ring hydroxylase family. KMO subfamily. FAD serves as cofactor.

The protein localises to the mitochondrion outer membrane. It catalyses the reaction L-kynurenine + NADPH + O2 + H(+) = 3-hydroxy-L-kynurenine + NADP(+) + H2O. Its pathway is cofactor biosynthesis; NAD(+) biosynthesis; quinolinate from L-kynurenine: step 1/3. Catalyzes the hydroxylation of L-kynurenine (L-Kyn) to form 3-hydroxy-L-kynurenine (L-3OHKyn). Required for synthesis of quinolinic acid. In Cryptococcus neoformans var. neoformans serotype D (strain JEC21 / ATCC MYA-565) (Filobasidiella neoformans), this protein is Kynurenine 3-monooxygenase.